A 395-amino-acid chain; its full sequence is Phosphoserine aminotransferase (395 aa).

At threonine 20 the chain carries Phosphothreonine. 80-81 (GT) is a binding site for pyridoxal 5'-phosphate. Serine 112 carries the post-translational modification Phosphoserine. Positions 113, 170, 194, and 217 each coordinate pyridoxal 5'-phosphate. N6-(pyridoxal phosphate)lysine is present on lysine 218. 271 to 272 (NT) is a pyridoxal 5'-phosphate binding site.

The protein belongs to the class-V pyridoxal-phosphate-dependent aminotransferase family. SerC subfamily. In terms of assembly, homodimer. Pyridoxal 5'-phosphate is required as a cofactor.

It carries out the reaction O-phospho-L-serine + 2-oxoglutarate = 3-phosphooxypyruvate + L-glutamate. The catalysed reaction is 4-(phosphooxy)-L-threonine + 2-oxoglutarate = (R)-3-hydroxy-2-oxo-4-phosphooxybutanoate + L-glutamate. Its pathway is amino-acid biosynthesis; L-serine biosynthesis; L-serine from 3-phospho-D-glycerate: step 2/3. Functionally, phosphoserine aminotransferase (PSAT) is a pyridoxal 5'-phosphate-dependent enzyme involved in the second step of the phosphorylated pathway of serine biosynthesis. Catalyzes the reversible conversion of 3-phosphohydroxypyruvate to phosphoserine and of 3-hydroxy-2-oxo-4-phosphonooxybutanoate to phosphohydroxythreonine. Plays an indirect role in purine biosynthesis. In Saccharomyces cerevisiae (strain ATCC 204508 / S288c) (Baker's yeast), this protein is Phosphoserine aminotransferase.